Reading from the N-terminus, the 141-residue chain is Hemoglobin subunit alpha (141 aa).

Positions 1–141 (VLSPADKTNI…VSTVLTSKYR (141 aa)) constitute a Globin domain. Serine 3 is subject to Phosphoserine. N6-succinyllysine is present on lysine 7. Threonine 8 is modified (phosphothreonine). The residue at position 11 (lysine 11) is an N6-succinyllysine. Residue lysine 16 is modified to N6-acetyllysine; alternate. Lysine 16 carries the post-translational modification N6-succinyllysine; alternate. Residue tyrosine 24 is modified to Phosphotyrosine. Residue serine 35 is modified to Phosphoserine. Lysine 40 is modified (N6-succinyllysine). Serine 49 is modified (phosphoserine). Histidine 58 is a binding site for O2. Position 87 (histidine 87) interacts with heme b. Position 102 is a phosphoserine (serine 102). Threonine 108 carries the post-translational modification Phosphothreonine. Residue serine 124 is modified to Phosphoserine. A phosphothreonine mark is found at threonine 134 and threonine 137. Serine 138 carries the phosphoserine modification.

This sequence belongs to the globin family. As to quaternary structure, heterotetramer of two alpha chains and two beta chains. Red blood cells.

Its function is as follows. Involved in oxygen transport from the lung to the various peripheral tissues. Functionally, hemopressin acts as an antagonist peptide of the cannabinoid receptor CNR1. Hemopressin-binding efficiently blocks cannabinoid receptor CNR1 and subsequent signaling. The protein is Hemoglobin subunit alpha (HBA) of Vulpes vulpes (Red fox).